The primary structure comprises 698 residues: Trafficking protein particle complex III-specific subunit 85 (698 aa).

Disordered stretches follow at residues 82–125 (VGQH…LFQR) and 678–698 (VDSAPRPSEKNLTRTSVSFIG). Residues 678 to 689 (VDSAPRPSEKNL) are compositionally biased toward basic and acidic residues.

It belongs to the TRS85 family. In terms of assembly, part of the multisubunit TRAPP (transport protein particle) III complex composed of BET3, BET5, TRS20, TRS23, TRS31, TRS33 and TRS85.

It is found in the preautophagosomal structure. Its function is as follows. Specific subunit of the TRAPP III complex that acts as an autophagy-specific guanine nucleotide exchange factor (GEF) for YPT1. TRS85 directs the TRAPP III complex to the phagophore assembly site (PAS) that is involved in autophagosome formation. Required for membrane expansion during autophagy and the CVT pathway. Required for sporulation. Has a role late in meiosis following DNA replication. In Saccharomyces cerevisiae (strain ATCC 204508 / S288c) (Baker's yeast), this protein is Trafficking protein particle complex III-specific subunit 85 (TRS85).